A 517-amino-acid chain; its full sequence is GMP synthase [glutamine-hydrolyzing] (517 aa).

The 194-residue stretch at 9-202 (KIIVLDYGSQ…AFNVCKAKGD (194 aa)) folds into the Glutamine amidotransferase type-1 domain. The active-site Nucleophile is the C86. Active-site residues include H176 and E178. The region spanning 203-392 (WSMDSFIDME…LGMPDEIVWR (190 aa)) is the GMPS ATP-PPase domain. 230-236 (SGGVDSS) contacts ATP.

In terms of assembly, homodimer.

It carries out the reaction XMP + L-glutamine + ATP + H2O = GMP + L-glutamate + AMP + diphosphate + 2 H(+). Its pathway is purine metabolism; GMP biosynthesis; GMP from XMP (L-Gln route): step 1/1. Its function is as follows. Catalyzes the synthesis of GMP from XMP. The sequence is that of GMP synthase [glutamine-hydrolyzing] from Streptococcus mutans serotype c (strain ATCC 700610 / UA159).